The sequence spans 189 residues: Receptor activity-modifying protein 2 (189 aa).

The N-terminal stretch at 1-44 (MAPLRVERAPGGSRLGVTRAQRPTALCLPPLLLLLLLLLGAVSA) is a signal peptide. The Extracellular segment spans residues 45-157 (SPESLNQSLP…VQPTFSDPPE (113 aa)). Over residues 49–61 (LNQSLPESQNQSH) the composition is skewed to polar residues. Residues 49-69 (LNQSLPESQNQSHPTEDSLVS) form a disordered region. N-linked (GlcNAc...) asparagine glycans are attached at residues Asn50, Asn58, Asn99, and Asn144. 2 disulfide bridges follow: Cys83-Cys113 and Cys98-Cys145. Residues 158–179 (DVLLAMIIAPICLIPFLVTLVV) traverse the membrane as a helical segment. The Cytoplasmic portion of the chain corresponds to 180–189 (WRSKDSDAQA).

Belongs to the RAMP family. As to quaternary structure, heterodimer of CALCRL and RAMP2; the interaction forms the receptor complex for adrenomedullin/ADM. Heterodimer of CALCR and RAMP2; interaction forms the AMYR2 receptor complex for calcitonin/CALC and amylin/IAPP. Ubiquitous. Expressed predominantly in embryonic brain, lung and gut and in adult heart, lung, skeletal muscle and brain.

It localises to the cell membrane. Accessory protein that interacts with and modulates the function of G-protein coupled receptors including calcitonin gene-related peptide type 1 receptor (CALCRL) and calcitonin receptor (CALCR). Required for the transport of CALCRL to the plasma membrane. Together with CALCRL, form a receptor complex for adrenomedullin/ADM. Together with CALCR, act as a receptor complex for calcitonin/CT/CALC. Together with CALCR, also act as a receptor complex for amylin/IAPP. The polypeptide is Receptor activity-modifying protein 2 (Mus musculus (Mouse)).